Reading from the N-terminus, the 275-residue chain is Putative carbamate hydrolase RutD (275 aa).

The AB hydrolase-1 domain maps to 15-116 (TVVLSSGLGG…SLVVINGWTV (102 aa)).

This sequence belongs to the AB hydrolase superfamily. Hydrolase RutD family.

It catalyses the reaction carbamate + 2 H(+) = NH4(+) + CO2. Its function is as follows. Involved in pyrimidine catabolism. May facilitate the hydrolysis of carbamate, a reaction that can also occur spontaneously. This is Putative carbamate hydrolase RutD from Pantoea ananatis (strain LMG 20103).